The primary structure comprises 75 residues: Putative sulfur carrier protein MJ0990 (75 aa).

Catalysis depends on Cys-15, which acts as the Cysteine persulfide intermediate.

The protein belongs to the sulfur carrier protein TusA family.

This is Putative sulfur carrier protein MJ0990 from Methanocaldococcus jannaschii (strain ATCC 43067 / DSM 2661 / JAL-1 / JCM 10045 / NBRC 100440) (Methanococcus jannaschii).